A 119-amino-acid polypeptide reads, in one-letter code: Acidic phospholipase A2 CM-II (119 aa).

Positions 25, 27, and 29 each coordinate Ca(2+). His45 is an active-site residue. Asp46 contributes to the Ca(2+) binding site. Asp87 is a catalytic residue.

Belongs to the phospholipase A2 family. Group II subfamily. D49 sub-subfamily. The cofactor is Ca(2+). In terms of processing, contains 6 disulfide bonds. Expressed by the venom gland.

The protein resides in the secreted. The catalysed reaction is a 1,2-diacyl-sn-glycero-3-phosphocholine + H2O = a 1-acyl-sn-glycero-3-phosphocholine + a fatty acid + H(+). PLA2 catalyzes the calcium-dependent hydrolysis of the 2-acyl groups in 3-sn-phosphoglycerides. This is Acidic phospholipase A2 CM-II from Bitis nasicornis (Rhinoceros adder).